Consider the following 105-residue polypeptide: ATP synthase subunit c (105 aa).

2 helical membrane-spanning segments follow: residues 37-57 and 82-102; these read IGAG…GYIF and SAIS…LIFV.

The protein belongs to the ATPase C chain family. F-type ATPases have 2 components, F(1) - the catalytic core - and F(0) - the membrane proton channel. F(1) has five subunits: alpha(3), beta(3), gamma(1), delta(1), epsilon(1). F(0) has three main subunits: a(1), b(2) and c(10-14). The alpha and beta chains form an alternating ring which encloses part of the gamma chain. F(1) is attached to F(0) by a central stalk formed by the gamma and epsilon chains, while a peripheral stalk is formed by the delta and b chains.

The protein resides in the cell membrane. In terms of biological role, f(1)F(0) ATP synthase produces ATP from ADP in the presence of a proton or sodium gradient. F-type ATPases consist of two structural domains, F(1) containing the extramembraneous catalytic core and F(0) containing the membrane proton channel, linked together by a central stalk and a peripheral stalk. During catalysis, ATP synthesis in the catalytic domain of F(1) is coupled via a rotary mechanism of the central stalk subunits to proton translocation. Functionally, key component of the F(0) channel; it plays a direct role in translocation across the membrane. A homomeric c-ring of between 10-14 subunits forms the central stalk rotor element with the F(1) delta and epsilon subunits. The protein is ATP synthase subunit c of Mycoplasma pneumoniae (strain ATCC 29342 / M129 / Subtype 1) (Mycoplasmoides pneumoniae).